A 610-amino-acid polypeptide reads, in one-letter code: Pheromone-processing carboxypeptidase KEX1 (610 aa).

The signal sequence occupies residues 1–18; sequence MSRYFLLACTLALQCVAA. Topologically, residues 19–494 are lumenal; that stretch reads SQEDYIVKDL…KEKPPKHHHS (476 aa). Asn68 is a glycosylation site (N-linked (GlcNAc...) asparagine). Ser176 is a catalytic residue. Residues Asn192 and Asn196 are each glycosylated (N-linked (GlcNAc...) asparagine). Asp371 is a catalytic residue. 2 N-linked (GlcNAc...) asparagine glycosylation sites follow: Asn418 and Asn426. His429 is an active-site residue. Positions 469 to 491 are disordered; it reads KFVEEKQDTDQNEEEEKEKPPKH. A helical membrane pass occupies residues 495-515; the sequence is LTFYVAEVAILAVLAYLLYSF. The Cytoplasmic portion of the chain corresponds to 516–610; the sequence is YKSFAKSRKS…QSDEEEFGHR (95 aa).

Belongs to the peptidase S10 family.

The protein localises to the golgi apparatus. The protein resides in the trans-Golgi network membrane. It carries out the reaction Preferential release of a C-terminal arginine or lysine residue.. Functionally, protease with a carboxypeptidase B-like function involved in the C-terminal processing of the lysine and arginine residues from protein precursors. Promotes cell fusion and is involved in the programmed cell death. The polypeptide is Pheromone-processing carboxypeptidase KEX1 (KEX1) (Ogataea parapolymorpha (strain ATCC 26012 / BCRC 20466 / JCM 22074 / NRRL Y-7560 / DL-1) (Yeast)).